Consider the following 75-residue polypeptide: Small, acid-soluble spore protein Tlp (75 aa).

The protein belongs to the Tlp family.

It localises to the spore core. This Geobacillus kaustophilus (strain HTA426) protein is Small, acid-soluble spore protein Tlp.